Consider the following 510-residue polypeptide: Pre-glycoprotein polyprotein GP complex (510 aa).

Glycine 2 carries N-myristoyl glycine; by host lipidation. At 2 to 17 the chain is on the extracellular side; sequence GQFITLMQSIPEALNM. Residues 18-32 form a helical membrane-spanning segment; that stretch reads AFNVALVIVSLLCVT. Lysine 33 is a topological domain (cytoplasmic). A helical membrane pass occupies residues 34-53; the sequence is GLINLWKCGIIQLLMFLALA. Extracellular-side segments run 54 to 58 and 59 to 448; these read GRSCD and GEYK…ALAD. Cysteine 57 provides a ligand contact to Zn(2+). Asparagine 75, asparagine 90, asparagine 101, asparagine 112, asparagine 117, asparagine 122, asparagine 133, asparagine 182, asparagine 218, and asparagine 243 each carry an N-linked (GlcNAc...) asparagine; by host glycan. Intrachain disulfides connect cysteine 87/cysteine 250, cysteine 295/cysteine 308, cysteine 317/cysteine 326, and cysteine 380/cysteine 401. Residues asparagine 381, asparagine 389, asparagine 406, and asparagine 411 are each glycosylated (N-linked (GlcNAc...) asparagine; by host). The chain crosses the membrane as a helical span at residues 449-469; the sequence is LCFWSLVFFTTTVFFQLIGIP. Over 470–510 the chain is Cytoplasmic; the sequence is THRHLIGEGCPKPHRLTSNSLCSCGFYKIPKKPFRWVRKGK. 6 residues coordinate Zn(2+): histidine 471, histidine 473, cysteine 479, histidine 483, cysteine 491, and cysteine 493.

The protein belongs to the arenaviridae GPC protein family. Homotetramer; disulfide-linked. In terms of assembly, homotetramer. GP2 homotetramers bind through ionic interactions with GP1 homotetramers to form the GP complex together with the stable signal peptide. The GP-C polyprotein interacts with the host protease MBTPS1/SKI-1 resulting in the polyprotein processing. Post-translationally, specific enzymatic cleavages in vivo yield mature proteins. GP-C polyprotein is cleaved in the endoplasmic reticulum by the host protease MBTPS1. Only cleaved glycoprotein is incorporated into virions. In terms of processing, the SSP remains stably associated with the GP complex following cleavage by signal peptidase and plays crucial roles in the trafficking of GP through the secretory pathway. Myristoylation is necessary for GP2-mediated fusion activity.

It localises to the virion membrane. The protein localises to the host endoplasmic reticulum membrane. It is found in the host Golgi apparatus membrane. The protein resides in the host cell membrane. Functionally, class I viral fusion protein that directs fusion of viral and host endosomal membranes, leading to delivery of the nucleocapsid into the cytoplasm. Membrane fusion is mediated by irreversible conformational changes induced upon acidification in the endosome. In terms of biological role, stable signal peptide (SSP): cleaved and functions as a signal peptide. In addition, it is also retained as the third component of the GP complex. The SSP is required for efficient glycoprotein expression, post-translational maturation cleavage of GP1 and GP2, glycoprotein transport to the cell surface plasma membrane, formation of infectious virus particles, and acid pH-dependent glycoprotein-mediated cell fusion. Interacts with the host receptor. In Pirital mammarenavirus (isolate Rat/Venezuela/VAV-488/1995) (PIRV), this protein is Pre-glycoprotein polyprotein GP complex.